A 71-amino-acid polypeptide reads, in one-letter code: Small ribosomal subunit protein bS21 (71 aa).

This sequence belongs to the bacterial ribosomal protein bS21 family.

The sequence is that of Small ribosomal subunit protein bS21 from Alcanivorax borkumensis (strain ATCC 700651 / DSM 11573 / NCIMB 13689 / SK2).